The sequence spans 389 residues: MDLFEYQARDMFEAHGVPVLAGIVAHTPEEAKAAAEKIGGVTVVKAQVKVGGRGKAGGVKVAKTADEALEHSTNILGMDIKGHTVNKVMIAQGADIAEEYYFSVLLDRANRNYLAMCSVEGGMEIEQLAVERPDALAKVAIDPAVGIDQAKADEIVAAAGFAEELRGKVADVILKLWDVFKKEDATLVEVNPLVKTGAGDIVALDGKVTLDENADFRHAKHALLEDKDAADPLEAKAKAQDLNYVKLDGEVGIIGNGAGLVMSTLDVVAYAGENHGNVKPANFLDIGGGASAEVMAAGLDVILGDEQVKSVFVNVFGGITACDAVAKGIVGALAELGHSANKPLVVRLDGNNVEEGRRILAEANHPLVTLAATMDEGADKAAELANAAK.

The ATP-grasp domain maps to 9–236 (RDMFEAHGVP…KDAADPLEAK (228 aa)). Residues Lys-45, 52 to 54 (GRG), Ala-94, and Glu-99 each bind ATP. The Mg(2+) site is built by Asn-191 and Asp-205. Residues Asn-256 and 318–320 (GIT) contribute to the substrate site.

This sequence belongs to the succinate/malate CoA ligase beta subunit family. Heterotetramer of two alpha and two beta subunits. Requires Mg(2+) as cofactor.

It carries out the reaction succinate + ATP + CoA = succinyl-CoA + ADP + phosphate. The enzyme catalyses GTP + succinate + CoA = succinyl-CoA + GDP + phosphate. The protein operates within carbohydrate metabolism; tricarboxylic acid cycle; succinate from succinyl-CoA (ligase route): step 1/1. Succinyl-CoA synthetase functions in the citric acid cycle (TCA), coupling the hydrolysis of succinyl-CoA to the synthesis of either ATP or GTP and thus represents the only step of substrate-level phosphorylation in the TCA. The beta subunit provides nucleotide specificity of the enzyme and binds the substrate succinate, while the binding sites for coenzyme A and phosphate are found in the alpha subunit. In Arthrobacter sp. (strain FB24), this protein is Succinate--CoA ligase [ADP-forming] subunit beta.